The sequence spans 88 residues: Insertion element ISR1 uncharacterized 10 kDa protein A3 (88 aa).

Belongs to the transposase 8 family.

This chain is Insertion element ISR1 uncharacterized 10 kDa protein A3, found in Rhizobium sp.